Consider the following 480-residue polypeptide: Glutamyl-tRNA(Gln) amidotransferase subunit A (480 aa).

Catalysis depends on charge relay system residues Lys79 and Ser154. The disordered stretch occupies residues 133–156; sequence NENSAYGPVRNPRDKSRVPGGSSG. Ser178 acts as the Acyl-ester intermediate in catalysis.

It belongs to the amidase family. GatA subfamily. As to quaternary structure, heterotrimer of A, B and C subunits.

The enzyme catalyses L-glutamyl-tRNA(Gln) + L-glutamine + ATP + H2O = L-glutaminyl-tRNA(Gln) + L-glutamate + ADP + phosphate + H(+). In terms of biological role, allows the formation of correctly charged Gln-tRNA(Gln) through the transamidation of misacylated Glu-tRNA(Gln) in organisms which lack glutaminyl-tRNA synthetase. The reaction takes place in the presence of glutamine and ATP through an activated gamma-phospho-Glu-tRNA(Gln). In Koribacter versatilis (strain Ellin345), this protein is Glutamyl-tRNA(Gln) amidotransferase subunit A.